A 506-amino-acid polypeptide reads, in one-letter code: Deoxyguanosinetriphosphate triphosphohydrolase (506 aa).

The HD domain occupies 66-274 (RLTHSLEVQQ…MEAADDISYC (209 aa)).

Belongs to the dGTPase family. Type 1 subfamily. Homotetramer. The cofactor is Mg(2+).

The enzyme catalyses dGTP + H2O = 2'-deoxyguanosine + triphosphate + H(+). In terms of biological role, dGTPase preferentially hydrolyzes dGTP over the other canonical NTPs. The polypeptide is Deoxyguanosinetriphosphate triphosphohydrolase (Yersinia pseudotuberculosis serotype O:3 (strain YPIII)).